The sequence spans 580 residues: Type II methyltransferase M.BanIII (580 aa).

Belongs to the N(4)/N(6)-methyltransferase family.

It carries out the reaction a 2'-deoxyadenosine in DNA + S-adenosyl-L-methionine = an N(6)-methyl-2'-deoxyadenosine in DNA + S-adenosyl-L-homocysteine + H(+). Its function is as follows. A gamma subtype methylase, recognizes the double-stranded sequence 5'-ATCGAT-3', methylates A-5 on both strands, and protects the DNA from cleavage by the BanIII endonuclease. This chain is Type II methyltransferase M.BanIII (banIIIM), found in Aneurinibacillus aneurinilyticus (Bacillus aneurinolyticus).